Consider the following 134-residue polypeptide: Profilin-5 (134 aa).

The protein belongs to the profilin family. In terms of assembly, occurs in many kinds of cells as a complex with monomeric actin in a 1:1 ratio. Specifically expressed in mature pollen grains. Expressed in germinating pollen grains. Expressed in growing pollen tubes (at protein level).

The protein localises to the cytoplasm. The protein resides in the cytoskeleton. Its function is as follows. Binds to actin monomers and regulates the organization of the actin cytoskeleton. At high concentrations, profilin prevents the polymerization of actin, whereas it enhances it at low concentrations. At low concentrations, associates with the poly-proline motif of formins to enhance actin filament elongation rate. Acts redundantly with PRF4 to regulate apical actin polymerization at the tip of pollen tube and control polarized pollen tube growth. Functions probably by favoring formin-mediated actin polymerization at pollen tube tips. The polypeptide is Profilin-5 (Arabidopsis thaliana (Mouse-ear cress)).